Here is a 243-residue protein sequence, read N- to C-terminus: Protein GID8 homolog (243 aa).

The 33-residue stretch at 40–72 folds into the LisH domain; it reads RKEDMNTLVMNFLVTEGYVEAAEKFQRESGTKP. One can recognise a CTLH domain in the interval 78 to 135; that stretch reads TITDRMAVKKAVQNGNVEDAIEKVNDLNPEILDTNPELFFHLQQQRLIELIRQGKTEE.

This sequence belongs to the GID8 family. Interacts with RANBPM.

Its subcellular location is the cytoplasm. The chain is Protein GID8 homolog from Arabidopsis thaliana (Mouse-ear cress).